A 440-amino-acid polypeptide reads, in one-letter code: Lysine histidine transporter-like 6 (440 aa).

The span at 1–10 shows a compositional bias: polar residues; that stretch reads MVSSSPVSPS. The interval 1 to 25 is disordered; sequence MVSSSPVSPSKETDRKSGEKWTAED. Over 1–31 the chain is Cytoplasmic; it reads MVSSSPVSPSKETDRKSGEKWTAEDPSRPAK. Over residues 11 to 25 the composition is skewed to basic and acidic residues; the sequence is KETDRKSGEKWTAED. Residues 32–51 form a helical membrane-spanning segment; it reads WWYSTFHTVTAMIGAGVLSL. At 52-61 the chain is on the extracellular side; sequence PYAMAYLGWG. The helical transmembrane segment at 62-82 threads the bilayer; that stretch reads PGTFVLAMTWGLTLNTMWQMV. Topologically, residues 83 to 109 are cytoplasmic; the sequence is QLHECVPGTRFDRYIDLGRYAFGPKLG. A helical transmembrane segment spans residues 110 to 130; the sequence is PWIVLPQQLIVQVGCNIVYMV. Residues 131–152 lie on the Extracellular side of the membrane; the sequence is TGGKCLKQFVEITCSTCTPVRQ. A helical membrane pass occupies residues 153–173; the sequence is SYWILGFGGVHFILSQLPNFN. Ser174 is a topological domain (cytoplasmic). The helical transmembrane segment at 175–195 threads the bilayer; it reads VAGVSLAAAVMSLCYSTIAWG. Over 196-221 the chain is Extracellular; that stretch reads GSIAHGRVPDVSYDYKATNPGDFTFR. A helical transmembrane segment spans residues 222–242; the sequence is VFNALGQISFAFAGHAVALEI. At 243-261 the chain is on the cytoplasmic side; sequence QATMPSTPERPSKVPMWQG. Residues 262–282 form a helical membrane-spanning segment; that stretch reads VIGAYVVNAVCYFPVALICYW. The Extracellular segment spans residues 283–300; sequence AFGQDVDDNVLMNLQRPA. The helical transmembrane segment at 301 to 321 threads the bilayer; that stretch reads WLIAAANLMVVVHVIGSYQVF. Residues 322 to 353 are Cytoplasmic-facing; the sequence is AMPVFDLLERMMVNKFGFKHGVVLRFFTRTIY. A run of 2 helical transmembrane segments spans residues 354–374 and 375–395; these read VAFTLFIGVSFPFFGDLLGFF and GGFGFAPTSFFLPSIMWLIIK. The Cytoplasmic segment spans residues 396 to 399; the sequence is KPRR. The chain crosses the membrane as a helical span at residues 400-420; the sequence is FSVTWFVNWISIIVGVFIMLA. At 421-440 the chain is on the extracellular side; that stretch reads STIGGLRNIIADSSTYSFYA.

It belongs to the amino acid/polyamine transporter 2 family. Amino acid/auxin permease (AAAP) (TC 2.A.18.2) subfamily.

The protein localises to the cell membrane. Functionally, amino acid transporter. The chain is Lysine histidine transporter-like 6 from Arabidopsis thaliana (Mouse-ear cress).